The primary structure comprises 199 residues: uncharacterized protein (199 aa).

4 helical membrane passes run 35–55, 57–77, 94–114, and 131–151; these read CELA…IFYD, FVIF…YLEF, LSAA…IFFG, and YYGC…ASFA.

The protein resides in the membrane. This is an uncharacterized protein from Caenorhabditis elegans.